Reading from the N-terminus, the 456-residue chain is Ezy-1 protein (456 aa).

The first 28 residues, 1–28 (MQLSSSLRSARSAAASSGCALASRPVVA), serve as a signal peptide directing secretion. Disordered regions lie at residues 167–189 (SDGGGDESGDRRTADAADADGDG), 273–310 (FTGKAEPGAEGDDGEDEEEGEAQGVGEDAVDSSSGGSG), and 414–456 (QPAG…SPNM). Residues 281-293 (AEGDDGEDEEEGE) are compositionally biased toward acidic residues. The span at 418–428 (DGHEPEPKRPE) shows a compositional bias: basic and acidic residues.

The chain is Ezy-1 protein (Ezy-1) from Chlamydomonas reinhardtii (Chlamydomonas smithii).